The primary structure comprises 150 residues: 3-hydroxyacyl-[acyl-carrier-protein] dehydratase FabZ (150 aa).

Residue histidine 57 is part of the active site.

It belongs to the thioester dehydratase family. FabZ subfamily.

The protein localises to the cytoplasm. The enzyme catalyses a (3R)-hydroxyacyl-[ACP] = a (2E)-enoyl-[ACP] + H2O. Involved in unsaturated fatty acids biosynthesis. Catalyzes the dehydration of short chain beta-hydroxyacyl-ACPs and long chain saturated and unsaturated beta-hydroxyacyl-ACPs. The chain is 3-hydroxyacyl-[acyl-carrier-protein] dehydratase FabZ from Actinobacillus succinogenes (strain ATCC 55618 / DSM 22257 / CCUG 43843 / 130Z).